Here is a 200-residue protein sequence, read N- to C-terminus: Mpv17-like protein 2 (200 aa).

3 helical membrane passes run 24-40 (ALLLTNTLGCGVLMAAG), 63-83 (ASMFAVGCSMGPFLHFWYLWL), and 102-122 (VLVDQTVASPILGVWYFLGLG).

The protein belongs to the peroxisomal membrane protein PXMP2/4 family. Interacts with the large mitochondrial ribosomal subunit.

It localises to the membrane. The protein resides in the mitochondrion inner membrane. Required for the assembly and stability of the mitochondrial ribosome. Is a positive regulator of mitochondrial protein synthesis. The chain is Mpv17-like protein 2 (Mpv17l2) from Mus musculus (Mouse).